Consider the following 161-residue polypeptide: Cyclic pyranopterin monophosphate synthase (161 aa).

Substrate contacts are provided by residues 75–77 (LCH) and 113–114 (ME). The active site involves Asp128.

This sequence belongs to the MoaC family. As to quaternary structure, homohexamer; trimer of dimers.

The catalysed reaction is (8S)-3',8-cyclo-7,8-dihydroguanosine 5'-triphosphate = cyclic pyranopterin phosphate + diphosphate. It participates in cofactor biosynthesis; molybdopterin biosynthesis. Functionally, catalyzes the conversion of (8S)-3',8-cyclo-7,8-dihydroguanosine 5'-triphosphate to cyclic pyranopterin monophosphate (cPMP). The polypeptide is Cyclic pyranopterin monophosphate synthase (Salmonella dublin (strain CT_02021853)).